Here is a 304-residue protein sequence, read N- to C-terminus: D-alanine--D-alanine ligase (304 aa).

One can recognise an ATP-grasp domain in the interval 103-299 (KLIWQALGLP…FADLCIEILK (197 aa)). 129 to 184 (EEKLGLPMFVKPAAEGSSVGVVKVKEKGRLKSVYEELKHLQGEIIAERFIGGGEYS) lines the ATP pocket. 3 residues coordinate Mg(2+): aspartate 253, glutamate 266, and asparagine 268.

Belongs to the D-alanine--D-alanine ligase family. Mg(2+) is required as a cofactor. Mn(2+) serves as cofactor.

It localises to the cytoplasm. The enzyme catalyses 2 D-alanine + ATP = D-alanyl-D-alanine + ADP + phosphate + H(+). Its pathway is cell wall biogenesis; peptidoglycan biosynthesis. In terms of biological role, cell wall formation. The sequence is that of D-alanine--D-alanine ligase from Neisseria gonorrhoeae (strain ATCC 700825 / FA 1090).